A 59-amino-acid chain; its full sequence is Insertion element IS986 uncharacterized 6.6 kDa protein (59 aa).

The tract at residues 1–26 is disordered; sequence MRKWVRQAQVDAGARPGTTTEESAEI.

It belongs to the transposase 8 family.

This is Insertion element IS986 uncharacterized 6.6 kDa protein from Mycobacterium tuberculosis.